The primary structure comprises 185 residues: QTGCYGVVNRIDTTGASCETAKPEKLNYCGVAASRKIAEGDLQSMDRYKTLIKKVGQKLCVDPAVIAGIISRESHAGKALKDGWGDNGNGFGLMQVDKRSHTPVGKWNGERHLTQGTEILISMIKKIQKKFPRWTKEQQLKGGISAYNAGSGNVRTYERMDIGTTHNDYANDVVARAQYYKQHGY.

Pyrrolidone carboxylic acid is present on Q1. 2 disulfides stabilise this stretch: C4–C60 and C18–C29. Residues E73 and D86 contribute to the active site.

The protein belongs to the glycosyl hydrolase 23 family.

It is found in the secreted. It carries out the reaction Hydrolysis of (1-&gt;4)-beta-linkages between N-acetylmuramic acid and N-acetyl-D-glucosamine residues in a peptidoglycan and between N-acetyl-D-glucosamine residues in chitodextrins.. The protein is Lysozyme g of Casuarius casuarius (Southern cassowary).